A 343-amino-acid polypeptide reads, in one-letter code: Programmed cell death protein 2 (343 aa).

Residues Cys-134, Cys-137, Cys-145, Cys-148, Cys-154, His-158, His-167, and Cys-171 each contribute to the Zn(2+) site. The MYND-type; atypical zinc finger occupies 134-171 (CRVCGCLAPMTCSRCKQAHYCSKEHQTLDWRLGHKQAC).

In terms of processing, ubiquitinated by PRKN, promoting proteasomal degradation.

Its subcellular location is the nucleus. Functionally, may be a DNA-binding protein with a regulatory function. May play an important role in cell death and/or in regulation of cell proliferation. The chain is Programmed cell death protein 2 (Pdcd2) from Mus musculus (Mouse).